We begin with the raw amino-acid sequence, 182 residues long: Adenine phosphoribosyltransferase (182 aa).

The protein belongs to the purine/pyrimidine phosphoribosyltransferase family. In terms of assembly, homodimer.

The protein localises to the cytoplasm. The catalysed reaction is AMP + diphosphate = 5-phospho-alpha-D-ribose 1-diphosphate + adenine. The protein operates within purine metabolism; AMP biosynthesis via salvage pathway; AMP from adenine: step 1/1. In terms of biological role, catalyzes a salvage reaction resulting in the formation of AMP, that is energically less costly than de novo synthesis. The sequence is that of Adenine phosphoribosyltransferase from Renibacterium salmoninarum (strain ATCC 33209 / DSM 20767 / JCM 11484 / NBRC 15589 / NCIMB 2235).